The following is a 466-amino-acid chain: Adenosylhomocysteinase (466 aa).

Substrate-binding residues include threonine 57, aspartate 132, and glutamate 192. 193 to 195 is an NAD(+) binding site; that stretch reads TTT. The substrate site is built by lysine 222 and aspartate 226. Residues asparagine 227, 256-261, glutamate 279, asparagine 314, 335-337, and asparagine 380 contribute to the NAD(+) site; these read GYGDVG and IGH.

The protein belongs to the adenosylhomocysteinase family. Requires NAD(+) as cofactor.

Its subcellular location is the cytoplasm. It carries out the reaction S-adenosyl-L-homocysteine + H2O = L-homocysteine + adenosine. It participates in amino-acid biosynthesis; L-homocysteine biosynthesis; L-homocysteine from S-adenosyl-L-homocysteine: step 1/1. Functionally, may play a key role in the regulation of the intracellular concentration of adenosylhomocysteine. The polypeptide is Adenosylhomocysteinase (Brucella abortus (strain S19)).